A 293-amino-acid chain; its full sequence is Diaminopimelate epimerase (293 aa).

Residues Asn-17, Gln-47, and Asn-67 each contribute to the substrate site. The active-site Proton donor is Cys-76. Substrate contacts are provided by residues 77–78 (GN), Asn-164, Asn-197, and 215–216 (ER). Cys-224 functions as the Proton acceptor in the catalytic mechanism. Residue 225 to 226 (GS) participates in substrate binding.

This sequence belongs to the diaminopimelate epimerase family. As to quaternary structure, homodimer.

The protein localises to the cytoplasm. The catalysed reaction is (2S,6S)-2,6-diaminopimelate = meso-2,6-diaminopimelate. The protein operates within amino-acid biosynthesis; L-lysine biosynthesis via DAP pathway; DL-2,6-diaminopimelate from LL-2,6-diaminopimelate: step 1/1. In terms of biological role, catalyzes the stereoinversion of LL-2,6-diaminopimelate (L,L-DAP) to meso-diaminopimelate (meso-DAP), a precursor of L-lysine and an essential component of the bacterial peptidoglycan. In Rhodopseudomonas palustris (strain HaA2), this protein is Diaminopimelate epimerase.